Consider the following 340-residue polypeptide: Guanine nucleotide-binding protein subunit beta-1 (340 aa).

Position 29 is a phosphoserine (serine 29). WD repeat units follow at residues 53–92 (GHLA…KVHA), 95–134 (LRSS…GNVR), 141–179 (GHGG…QVTS), 182–221 (GHTG…CKQT), 224–263 (GHES…ELAM), 268–307 (NIIC…RSGI), and 310–340 (GHDN…RVWN).

Belongs to the WD repeat G protein beta family. As to quaternary structure, g proteins are composed of 3 units, alpha, beta and gamma. In terms of tissue distribution, expressed in the brain neuropil and cortex, and the thoracic ganglion (at protein level). Expression detected in eye at protein level but not at mRNA level, suggesting cross reactivity of antibodies to the similar Gbeta76C protein.

Guanine nucleotide-binding proteins (G proteins) are involved as a modulator or transducer in various transmembrane signaling systems. The beta and gamma chains are required for the GTPase activity, for replacement of GDP by GTP, and for G protein-effector interaction. The chain is Guanine nucleotide-binding protein subunit beta-1 (Gbeta13F) from Drosophila melanogaster (Fruit fly).